The sequence spans 272 residues: Putative hydro-lyase BBta_2883 (272 aa).

This sequence belongs to the D-glutamate cyclase family.

This is Putative hydro-lyase BBta_2883 from Bradyrhizobium sp. (strain BTAi1 / ATCC BAA-1182).